The following is a 797-amino-acid chain: Probable exo-1,4-beta-xylosidase bxlB (797 aa).

A signal peptide spans 1–21; the sequence is MPLICIVYFLQYLDKIAISYA. N-linked (GlcNAc...) asparagine glycosylation is found at Asn86 and Asn126. Asp312 is a catalytic residue. Residues Asn364, Asn431, Asn442, Asn483, Asn644, and Asn787 are each glycosylated (N-linked (GlcNAc...) asparagine).

This sequence belongs to the glycosyl hydrolase 3 family.

The protein resides in the secreted. It carries out the reaction Hydrolysis of (1-&gt;4)-beta-D-xylans, to remove successive D-xylose residues from the non-reducing termini.. Its pathway is glycan degradation; xylan degradation. Its function is as follows. Xylan 1,4-beta-xylosidase involved in the hydrolysis of xylan, a major structural heterogeneous polysaccharide found in plant biomass representing the second most abundant polysaccharide in the biosphere, after cellulose. The chain is Probable exo-1,4-beta-xylosidase bxlB (bxlB) from Aspergillus oryzae (strain ATCC 42149 / RIB 40) (Yellow koji mold).